We begin with the raw amino-acid sequence, 291 residues long: Porphobilinogen deaminase (291 aa).

C238 bears the S-(dipyrrolylmethanemethyl)cysteine mark.

This sequence belongs to the HMBS family. Monomer. It depends on dipyrromethane as a cofactor.

The enzyme catalyses 4 porphobilinogen + H2O = hydroxymethylbilane + 4 NH4(+). Its pathway is porphyrin-containing compound metabolism; protoporphyrin-IX biosynthesis; coproporphyrinogen-III from 5-aminolevulinate: step 2/4. Tetrapolymerization of the monopyrrole PBG into the hydroxymethylbilane pre-uroporphyrinogen in several discrete steps. This is Porphobilinogen deaminase from Clostridium beijerinckii (strain ATCC 51743 / NCIMB 8052) (Clostridium acetobutylicum).